Reading from the N-terminus, the 151-residue chain is D-aminoacyl-tRNA deacylase (151 aa).

Residues 136-137 (GP) carry the Gly-cisPro motif, important for rejection of L-amino acids motif.

The protein belongs to the DTD family. As to quaternary structure, homodimer.

The protein resides in the cytoplasm. The enzyme catalyses glycyl-tRNA(Ala) + H2O = tRNA(Ala) + glycine + H(+). It carries out the reaction a D-aminoacyl-tRNA + H2O = a tRNA + a D-alpha-amino acid + H(+). In terms of biological role, an aminoacyl-tRNA editing enzyme that deacylates mischarged D-aminoacyl-tRNAs. Also deacylates mischarged glycyl-tRNA(Ala), protecting cells against glycine mischarging by AlaRS. Acts via tRNA-based rather than protein-based catalysis; rejects L-amino acids rather than detecting D-amino acids in the active site. By recycling D-aminoacyl-tRNA to D-amino acids and free tRNA molecules, this enzyme counteracts the toxicity associated with the formation of D-aminoacyl-tRNA entities in vivo and helps enforce protein L-homochirality. In Lactococcus lactis subsp. cremoris (strain SK11), this protein is D-aminoacyl-tRNA deacylase.